Here is a 452-residue protein sequence, read N- to C-terminus: Mitochondrial distribution and morphology protein 10 (452 aa).

The protein belongs to the MDM10 family. Component of the ER-mitochondria encounter structure (ERMES) or MDM complex, composed of MMM1, MDM10, MDM12 and MDM34. Associates with the mitochondrial outer membrane sorting assembly machinery SAM(core) complex.

The protein resides in the mitochondrion outer membrane. Functionally, component of the ERMES/MDM complex, which serves as a molecular tether to connect the endoplasmic reticulum and mitochondria. Components of this complex are involved in the control of mitochondrial shape and protein biogenesis and may function in phospholipid exchange. MDM10 is involved in the late assembly steps of the general translocase of the mitochondrial outer membrane (TOM complex). Functions in the TOM40-specific route of the assembly of outer membrane beta-barrel proteins, including the association of TOM40 with the receptor TOM22 and small TOM proteins. Can associate with the SAM(core) complex as well as the MDM12-MMM1 complex, both involved in late steps of the major beta-barrel assembly pathway, that is responsible for biogenesis of all outer membrane beta-barrel proteins. May act as a switch that shuttles between both complexes and channels precursor proteins into the TOM40-specific pathway. Plays a role in mitochondrial morphology and in the inheritance of mitochondria. This Kluyveromyces lactis (strain ATCC 8585 / CBS 2359 / DSM 70799 / NBRC 1267 / NRRL Y-1140 / WM37) (Yeast) protein is Mitochondrial distribution and morphology protein 10.